The following is a 157-amino-acid chain: Transcription elongation factor GreB (157 aa).

The protein belongs to the GreA/GreB family. GreB subfamily.

Its function is as follows. Necessary for efficient RNA polymerase transcription elongation past template-encoded arresting sites. The arresting sites in DNA have the property of trapping a certain fraction of elongating RNA polymerases that pass through, resulting in locked ternary complexes. Cleavage of the nascent transcript by cleavage factors such as GreA or GreB allows the resumption of elongation from the new 3'terminus. GreB releases sequences of up to 9 nucleotides in length. The polypeptide is Transcription elongation factor GreB (Salmonella typhi).